Here is a 570-residue protein sequence, read N- to C-terminus: MEKKWTYCAVYSIIQMHLVRGIVEETFGAEEHIYALPGSDVNLTCQTQKKGILVQMQWSKVTDKVDLLAVYHPQHGFYCDSKSACRSLVAFREPPGNVFEWTLYLRNVSSSTTGKYECSFTLYPEGIQTKIYSLKIQTNVAQEEWKNNHTIEIEINGTLEIPCFQNTSLEISSVLTFAWLVEDNGTQKTLTAGGHPISNSALFKDRVRIGTDYRLYLSPVQIHDDGWKFSCHVVVRPGRVLRSSTTVKVFAKPEIPMIVENNSMDVIGERIFTCSLRNVFPTANLTWFIQRSFPQGEREEMYTTSEKRKNKDGFWELKSVLTSAYDNKPAHSNNLTIWCMALSPAPGHKVWNSSSEKITFFLGSLNPPIDSPLNATESTLGTRPSLANSISPTGYRTPSSTAHVDVSTSTSNVILPSVQTSNSDVPTRGFNYSWTSSGKDAKHSAPWMPSETNSSPSSGAGSTLPGDIFTSTTRASSEVPTTANVSTKNNHITGTVISKPKDGMSWPVIVAALLLSCFVLFGLGVRKWCQYQKEIMQRPPPFKPPPPPIKYTCIQESIGSDLPCHELETL.

The N-terminal stretch at 1–21 (MEKKWTYCAVYSIIQMHLVRG) is a signal peptide. Over 22–504 (IVEETFGAEE…TVISKPKDGM (483 aa)) the chain is Extracellular. The region spanning 38–125 (GSDVNLTCQT…YECSFTLYPE (88 aa)) is the Ig-like V-type 1 domain. Residues asparagine 42, asparagine 107, asparagine 148, asparagine 156, asparagine 166, asparagine 184, asparagine 261, asparagine 284, asparagine 334, asparagine 352, asparagine 374, and asparagine 431 are each glycosylated (N-linked (GlcNAc...) asparagine). Cysteines 45 and 118 form a disulfide. The Ig-like V-type 2 domain maps to 156–222 (NGTLEIPCFQ…YRLYLSPVQI (67 aa)). The cysteines at positions 163 and 231 are disulfide-linked. Residues 253–359 (PEIPMIVENN…VWNSSSEKIT (107 aa)) form the Ig-like C2-type domain. Residues cysteine 274 and cysteine 339 are joined by a disulfide bond. The interval 373-403 (LNATESTLGTRPSLANSISPTGYRTPSSTAH) is disordered. The interval 441-486 (AKHSAPWMPSETNSSPSSGAGSTLPGDIFTSTTRASSEVPTTANVS) is disordered. Polar residues-rich tracts occupy residues 450–461 (SETNSSPSSGAG) and 469–486 (FTST…ANVS). Asparagine 484 carries N-linked (GlcNAc...) asparagine glycosylation. Residues 505–525 (SWPVIVAALLLSCFVLFGLGV) traverse the membrane as a helical segment. The Cytoplasmic portion of the chain corresponds to 526–570 (RKWCQYQKEIMQRPPPFKPPPPPIKYTCIQESIGSDLPCHELETL).

Homodimer; disulfide-linked. Interacts with PVR.

It is found in the membrane. Functionally, may be involved in adhesive interactions of activated T and NK cells during the late phase of the immune response. Promotes NK cell-target adhesion by interacting with PVR present on target cells. May function at a time after T and NK cells have penetrated the endothelium using integrins and selectins, when they are actively engaging diseased cells and moving within areas of inflammation. This is T-cell surface protein tactile (CD96) from Bos taurus (Bovine).